The sequence spans 202 residues: Small ribosomal subunit protein uS4c (202 aa).

The S4 RNA-binding domain occupies 90 to 158 (MRSDNVIFRL…ISKNIELYQK (69 aa)).

This sequence belongs to the universal ribosomal protein uS4 family. Part of the 30S ribosomal subunit. Contacts protein S5. The interaction surface between S4 and S5 is involved in control of translational fidelity.

The protein resides in the plastid. The protein localises to the chloroplast. In terms of biological role, one of the primary rRNA binding proteins, it binds directly to 16S rRNA where it nucleates assembly of the body of the 30S subunit. With S5 and S12 plays an important role in translational accuracy. The sequence is that of Small ribosomal subunit protein uS4c (rps4) from Exsertotheca crispa (Moss).